The sequence spans 1348 residues: ABC multidrug transporter atrD (1348 aa).

A compositionally biased stretch (polar residues) spans 1-10 (MSPLETNPLS). The segment at 1 to 67 (MSPLETNPLS…HRPKSSSSNN (67 aa)) is disordered. Positions 20-31 (ETSTTEEQASTP) are enriched in low complexity. An N-linked (GlcNAc...) asparagine glycan is attached at N99. 4 consecutive transmembrane segments (helical) span residues 114–134 (ILIMVISTICAIAAGAALPLF), 168–188 (YFVYLGIGEFVTVYVSTVGFI), 240–260 (KVGLTLTALATFVTAFIIAYV), and 268–288 (ICSSTIVALVLTMGGGSQFII). An ABC transmembrane type-1 1 domain is found at 118–408 (VISTICAIAA…VSPNAQAFTN (291 aa)). Residue N314 is glycosylated (N-linked (GlcNAc...) asparagine). The next 2 helical transmembrane spans lie at 344–364 (IVMGFMIGAMFGLMYSNYGLG) and 371–391 (FLVDGAVDVGDILTVLMAILI). Positions 443–688 (IELRNVKHIY…GGAYRKLVEA (246 aa)) constitute an ABC transporter 1 domain. 478–485 (GPSGSGKS) contributes to the ATP binding site. The N-linked (GlcNAc...) asparagine glycan is linked to N550. Helical transmembrane passes span 778–798 (MLIGLVFSVLAGGGQPTQAVL) and 825–845 (LMFFVVGIIQFITQSTNGAAF). Residues 779-1068 (LIGLVFSVLA…VFSFAPDMGK (290 aa)) form the ABC transmembrane type-1 2 domain. N877 carries an N-linked (GlcNAc...) asparagine glycan. 4 consecutive transmembrane segments (helical) span residues 892-912 (HLSGVSGVTLGTILMTSTTLG), 925-947 (LALVCISVVPVLLACGFYRFYML), 1015-1035 (ALVFFCVALGFWYGGTLLGHH), and 1042-1062 (FFVCFSEILFGAQSAGTVFSF). N1088 carries N-linked (GlcNAc...) asparagine glycosylation. Residues 1103–1341 (IEFRNVHFRY…KGRYYELVNL (239 aa)) enclose the ABC transporter 2 domain. Position 1138 to 1145 (1138 to 1145 (GPSGCGKS)) interacts with ATP.

It belongs to the ABC transporter superfamily. ABCB family. Multidrug resistance exporter (TC 3.A.1.201) subfamily.

It localises to the cell membrane. Fenamirol efflux transporter activity is inhibited by the cyclosporin derivative PSC 833, nigericin, reserpine and valinomycin. The effect of reserpine is transiant, while that of the cyclosporin derivative PSC 833, nigericin and valinomycin is proportional to the time of exposure. Cyclohexinmide has inhibitory effect only when applied prior to addition of the fungicide. Pleiotropic ABC efflux transporter involved in the protection of the cells against a wide range of toxic compounds. Confers resistance to the azole fenarimol via efflux transport. May also be involved in the secretion of penicillin. In Emericella nidulans (Aspergillus nidulans), this protein is ABC multidrug transporter atrD.